Reading from the N-terminus, the 761-residue chain is Wall-associated receptor kinase-like 4 (761 aa).

The first 26 residues, 1–26, serve as a signal peptide directing secretion; it reads MKKETQNLQCIPLVISVLSLFGVSSA. Residues 27–349 are Extracellular-facing; the sequence is RKPPYLCNRV…EPKKPGQIKP (323 aa). Asn64, Asn166, Asn206, Asn226, and Asn262 each carry an N-linked (GlcNAc...) asparagine glycan. Positions 278 to 339 are atypical EGF-like; it reads CVCSYGYFSG…CVNKPGWFTC (62 aa). 3 cysteine pairs are disulfide-bonded: Cys280-Cys293, Cys316-Cys330, and Cys325-Cys339. The chain crosses the membrane as a helical span at residues 350–370; that stretch reads VFQGVLIGSALLLFAFGIFGL. Over 371 to 761 the chain is Cytoplasmic; sequence YKFIKKQRRS…VEPLVPLRTW (391 aa). The Protein kinase domain occupies 424-697; that stretch reads FNTNRVLGQG…REVSVELERI (274 aa). ATP contacts are provided by residues 430–438 and Lys452; that span reads LGQGGQGTV. Tyr497 carries the phosphotyrosine modification. Asp549 (proton acceptor) is an active-site residue. Phosphothreonine occurs at positions 583 and 588. A Phosphotyrosine modification is found at Tyr596. The tract at residues 701–761 is disordered; that stretch reads SYKSEIHNDD…VEPLVPLRTW (61 aa). The span at 708–732 shows a compositional bias: acidic residues; it reads NDDDDDDDDDDEDDQAMELNIEETW.

Belongs to the protein kinase superfamily. Ser/Thr protein kinase family. As to expression, expressed in the whole plant. Detected in root-shoot junctions and lateral root initiation sites.

Its subcellular location is the membrane. It carries out the reaction L-seryl-[protein] + ATP = O-phospho-L-seryl-[protein] + ADP + H(+). It catalyses the reaction L-threonyl-[protein] + ATP = O-phospho-L-threonyl-[protein] + ADP + H(+). Serine/threonine-protein kinase that may function as a signaling receptor of extracellular matrix component. Plays a role in plant mineral nutrients response. The chain is Wall-associated receptor kinase-like 4 (WAKL4) from Arabidopsis thaliana (Mouse-ear cress).